The primary structure comprises 275 residues: Undecaprenyl-diphosphatase (275 aa).

The next 7 membrane-spanning stretches (helical) occupy residues 1–21 (MTTF…FLPV), 41–61 (ILFL…FVYA), 95–115 (LLII…KDLF), 118–138 (FYNS…LLWT), 192–212 (ATKF…VFEV), 223–243 (FTLT…VFAI), and 255–275 (LYYF…FSLL).

It belongs to the UppP family.

The protein localises to the cell membrane. The enzyme catalyses di-trans,octa-cis-undecaprenyl diphosphate + H2O = di-trans,octa-cis-undecaprenyl phosphate + phosphate + H(+). Functionally, catalyzes the dephosphorylation of undecaprenyl diphosphate (UPP). Confers resistance to bacitracin. This chain is Undecaprenyl-diphosphatase, found in Alkaliphilus metalliredigens (strain QYMF).